Here is a 413-residue protein sequence, read N- to C-terminus: Serine--tRNA ligase (413 aa).

221 to 223 (TAE) lines the L-serine pocket. An ATP-binding site is contributed by 252 to 254 (RRE). Glutamate 275 lines the L-serine pocket. Residue 339–342 (EVSS) participates in ATP binding. Serine 375 is a binding site for L-serine.

The protein belongs to the class-II aminoacyl-tRNA synthetase family. Type-1 seryl-tRNA synthetase subfamily. In terms of assembly, homodimer. The tRNA molecule binds across the dimer.

The protein localises to the cytoplasm. It carries out the reaction tRNA(Ser) + L-serine + ATP = L-seryl-tRNA(Ser) + AMP + diphosphate + H(+). The catalysed reaction is tRNA(Sec) + L-serine + ATP = L-seryl-tRNA(Sec) + AMP + diphosphate + H(+). The protein operates within aminoacyl-tRNA biosynthesis; selenocysteinyl-tRNA(Sec) biosynthesis; L-seryl-tRNA(Sec) from L-serine and tRNA(Sec): step 1/1. In terms of biological role, catalyzes the attachment of serine to tRNA(Ser). Is also able to aminoacylate tRNA(Sec) with serine, to form the misacylated tRNA L-seryl-tRNA(Sec), which will be further converted into selenocysteinyl-tRNA(Sec). The sequence is that of Serine--tRNA ligase from Dehalococcoides mccartyi (strain ATCC BAA-2266 / KCTC 15142 / 195) (Dehalococcoides ethenogenes (strain 195)).